The chain runs to 874 residues: Alanine--tRNA ligase (874 aa).

Zn(2+)-binding residues include His561, His565, Cys663, and His667.

It belongs to the class-II aminoacyl-tRNA synthetase family. The cofactor is Zn(2+).

The protein resides in the cytoplasm. The enzyme catalyses tRNA(Ala) + L-alanine + ATP = L-alanyl-tRNA(Ala) + AMP + diphosphate. Its function is as follows. Catalyzes the attachment of alanine to tRNA(Ala) in a two-step reaction: alanine is first activated by ATP to form Ala-AMP and then transferred to the acceptor end of tRNA(Ala). Also edits incorrectly charged Ser-tRNA(Ala) and Gly-tRNA(Ala) via its editing domain. This is Alanine--tRNA ligase from Trichodesmium erythraeum (strain IMS101).